The sequence spans 89 residues: Small ribosomal subunit protein uS15 (89 aa).

The interval 1-22 (MALEKEEKSQIINNYQLHETDT) is disordered. Residues 10–22 (QIINNYQLHETDT) are compositionally biased toward polar residues.

Belongs to the universal ribosomal protein uS15 family. In terms of assembly, part of the 30S ribosomal subunit. Forms a bridge to the 50S subunit in the 70S ribosome, contacting the 23S rRNA.

In terms of biological role, one of the primary rRNA binding proteins, it binds directly to 16S rRNA where it helps nucleate assembly of the platform of the 30S subunit by binding and bridging several RNA helices of the 16S rRNA. Forms an intersubunit bridge (bridge B4) with the 23S rRNA of the 50S subunit in the ribosome. The protein is Small ribosomal subunit protein uS15 of Chloroflexus aggregans (strain MD-66 / DSM 9485).